Consider the following 72-residue polypeptide: Translation initiation factor IF-1 (72 aa).

An S1-like domain is found at 1-72 (MTKEDCIEMQ…SKGRIIFRSR (72 aa)).

Belongs to the IF-1 family. In terms of assembly, component of the 30S ribosomal translation pre-initiation complex which assembles on the 30S ribosome in the order IF-2 and IF-3, IF-1 and N-formylmethionyl-tRNA(fMet); mRNA recruitment can occur at any time during PIC assembly.

It localises to the cytoplasm. In terms of biological role, one of the essential components for the initiation of protein synthesis. Stabilizes the binding of IF-2 and IF-3 on the 30S subunit to which N-formylmethionyl-tRNA(fMet) subsequently binds. Helps modulate mRNA selection, yielding the 30S pre-initiation complex (PIC). Upon addition of the 50S ribosomal subunit IF-1, IF-2 and IF-3 are released leaving the mature 70S translation initiation complex. The protein is Translation initiation factor IF-1 of Buchnera aphidicola subsp. Baizongia pistaciae (strain Bp).